Reading from the N-terminus, the 564-residue chain is Multidrug resistance protein 1 (564 aa).

The Cytoplasmic segment spans residues 1–115 (MHYRFLRDSF…NPQNWPTLQK (115 aa)). Residues 60 to 101 (IDNQGEPNSSQSSSSNNTIVDNNNNNDNDVDGDKIVVTWDGD) are disordered. The segment covering 67 to 86 (NSSQSSSSNNTIVDNNNNND) has biased composition (low complexity). The chain crosses the membrane as a helical span at residues 116-136 (AFFIFQISFLTTSVYMGSAVY). The Extracellular segment spans residues 137–151 (TPGIEELMHDFGIGR). The helical transmembrane segment at 152–172 (VVATLPLTLFVIGYGVGPLVF) threads the bilayer. At 173 to 183 (SPMSENAIFGR) the chain is on the cytoplasmic side. Residues 184-204 (TSIYIITLFLFVILQIPTALV) traverse the membrane as a helical segment. At 205-206 (NN) the chain is on the extracellular side. A helical transmembrane segment spans residues 207–227 (IAGLCILRFLGGFFASPCLAT). Residues 228 to 242 (GGASVADVVKFWNLP) are Cytoplasmic-facing. Residues 243–263 (VGLAAWSLGAVCGPSFGPFFG) traverse the membrane as a helical segment. The Extracellular segment spans residues 264 to 273 (SILTVKASWR). Residues 274–294 (WTFWFMCIISGFSFVMLCFTL) traverse the membrane as a helical segment. Residues 295-350 (PETFGKTLLYRKAKRLRAITGNDRITSEGEVENSKMTSHELIIDTLWRPLEITVME) lie on the Cytoplasmic side of the membrane. Residues 351–371 (PVVLLINIYIAMVYSILYLFF) form a helical membrane-spanning segment. The Extracellular segment spans residues 372-390 (EVFPIYFVGVKHFTLVELG). The chain crosses the membrane as a helical span at residues 391 to 411 (TTYMSIVIGIVIAAFIYIPVI). Residues 412-428 (RQKFTKPILRQEQVFPE) lie on the Cytoplasmic side of the membrane. Residues 429-449 (VFIPIAIVGGILLTSGLFIFG) traverse the membrane as a helical segment. The Extracellular segment spans residues 450-455 (WSANRT). The N-linked (GlcNAc...) asparagine glycan is linked to asparagine 453. A helical transmembrane segment spans residues 456–476 (THWVGPLFGAATTASGAFLIF). Residues 477–503 (QTLFNFMGASFKPHYIASVFASNDLFR) are Cytoplasmic-facing. The helical transmembrane segment at 504-524 (SVIASVFPLFGAPLFDNLATP) threads the bilayer. The Extracellular segment spans residues 525-528 (EYPV). The chain crosses the membrane as a helical span at residues 529-549 (AWGSSVLGFITLVMIAIPVLF). Over 550 to 564 (YLNGPKLRARSKYAN) the chain is Cytoplasmic.

The protein belongs to the major facilitator superfamily. CAR1 family.

It is found in the cell membrane. Plasma membrane multidrug efflux pump that confers resistance to numerous chemicals including azoles such as fluconazole, voriconazole, and benztriazoles, as well as to benomyl, cycloheximide, methotrexate, 4-nitroquinoline-N-oxide, sulfometuron methyl, cerulenin, and brefeldin A. This Candida albicans (strain SC5314 / ATCC MYA-2876) (Yeast) protein is Multidrug resistance protein 1.